Consider the following 79-residue polypeptide: MHHVRQLMMPICPMALNSTTSSSTTFGAFRIMTLNVEEWATAWKVLILLEAAVEEEKRSEEKRILVCGTCGTRSSQKNL.

This is an uncharacterized protein from Homo sapiens (Human).